Consider the following 91-residue polypeptide: Large ribosomal subunit protein eL37B (91 aa).

Cys-19, Cys-22, Cys-34, and Cys-37 together coordinate Zn(2+). The C4-type zinc-finger motif lies at 19 to 37 (CRRCGKRSFHIQKSTCACC).

This sequence belongs to the eukaryotic ribosomal protein eL37 family. In terms of assembly, component of the large ribosomal subunit (LSU). Mature yeast ribosomes consist of a small (40S) and a large (60S) subunit. The 40S small subunit contains 1 molecule of ribosomal RNA (18S rRNA) and at least 33 different proteins. The large 60S subunit contains 3 rRNA molecules (25S, 5.8S and 5S rRNA) and at least 46 different proteins. It depends on Zn(2+) as a cofactor.

The protein resides in the cytoplasm. In terms of biological role, component of the ribosome, a large ribonucleoprotein complex responsible for the synthesis of proteins in the cell. The small ribosomal subunit (SSU) binds messenger RNAs (mRNAs) and translates the encoded message by selecting cognate aminoacyl-transfer RNA (tRNA) molecules. The large subunit (LSU) contains the ribosomal catalytic site termed the peptidyl transferase center (PTC), which catalyzes the formation of peptide bonds, thereby polymerizing the amino acids delivered by tRNAs into a polypeptide chain. The nascent polypeptides leave the ribosome through a tunnel in the LSU and interact with protein factors that function in enzymatic processing, targeting, and the membrane insertion of nascent chains at the exit of the ribosomal tunnel. The sequence is that of Large ribosomal subunit protein eL37B (rpl3702) from Schizosaccharomyces pombe (strain 972 / ATCC 24843) (Fission yeast).